We begin with the raw amino-acid sequence, 121 residues long: Chorion class CA protein ERA.4 (121 aa).

The signal sequence occupies residues 1 to 23; the sequence is MSSSFFCFFLFCFQTCLIQNVYS. Residues 24–57 form a left arm region; the sequence is QCLGRVGPGGPPLGPYGGPLGGPGYGPVGYGGCG. Positions 58–105 are central domain; the sequence is GYGGSGIGNVAVAGELPVAGSAAVLGQVPVIGAVEFAGPACAVGSVSI. The segment at 106–121 is right arm; that stretch reads SGACGPTCGCGGSPYY.

It belongs to the chorion protein family.

This protein is one of many from the eggshell of the silk moth. This Bombyx mori (Silk moth) protein is Chorion class CA protein ERA.4 (ERA.4).